Here is a 1336-residue protein sequence, read N- to C-terminus: SH3 domain and tetratricopeptide repeat-containing protein 1 (1336 aa).

Methionine 1 bears the N-acetylmethionine mark. Disordered stretches follow at residues 1 to 76 (MENL…PPCQ) and 225 to 266 (TGPR…SEEV). Residues 18–27 (GPVGPSGGGS) show a composition bias toward gly residues. The span at 46 to 61 (AGPEEAKAPVRGDEAP) shows a compositional bias: basic and acidic residues. Low complexity-rich tracts occupy residues 62–74 (PARVAGPAAGTPP) and 247–266 (EAAPETDSSPPSPSVSSEEV). Residues 305–368 (MAVGLASALA…RSSLISMQGP (64 aa)) form the SH3 domain. 8 TPR repeats span residues 560–593 (ARLCFLLGRLCSRRLKLSQARVYFEEALGALEGS), 601–634 (VAVYANLASIYRKQKNREKCAQVVPKAMALLLGT), 665–698 (ARACFLLARHHVHLKQPEEALPFLERLLLLHRDS), 786–819 (GPLYTSLAQLYSHHGCHGPAITFMTQAVEASAIA), 863–896 (GVIANMVAVALKRTGRTRQAAESYYRALRVARDL), 946–979 (THVLLQLGHLCTRQGPAQQGKGYYEWALLVAVEM), 1027–1063 (GQLLETISQLYLSLGTERAYKSALDYTKRSLGIFIDL), and 1192–1225 (RVAYHRLAALQHRLGHGELAEHFYLKALSLCNSP). The residue at position 1248 (tyrosine 1248) is a Phosphotyrosine. The TPR 9 repeat unit spans residues 1277–1311 (LKIYTRLATIYHNFLLDREKSLFFYQKARTFATEL).

The protein is SH3 domain and tetratricopeptide repeat-containing protein 1 (SH3TC1) of Homo sapiens (Human).